The following is a 331-amino-acid chain: DNA-directed RNA polymerase subunit alpha (331 aa).

The segment at 1–226 is alpha N-terminal domain (alpha-NTD); the sequence is MLIAQRPTLT…ELFGLARELN (226 aa). Positions 243–331 are alpha C-terminal domain (alpha-CTD); that stretch reads LSSELSMPIE…SYDEDETTTN (89 aa).

This sequence belongs to the RNA polymerase alpha chain family. In terms of assembly, homodimer. The RNAP catalytic core consists of 2 alpha, 1 beta, 1 beta' and 1 omega subunit. When a sigma factor is associated with the core the holoenzyme is formed, which can initiate transcription.

It carries out the reaction RNA(n) + a ribonucleoside 5'-triphosphate = RNA(n+1) + diphosphate. In terms of biological role, DNA-dependent RNA polymerase catalyzes the transcription of DNA into RNA using the four ribonucleoside triphosphates as substrates. This Clavibacter sepedonicus (Clavibacter michiganensis subsp. sepedonicus) protein is DNA-directed RNA polymerase subunit alpha.